The primary structure comprises 1249 residues: Minor capsid protein M1249L (1249 aa).

Belongs to the asfivirus M1249L family. In terms of assembly, interacts with the minor capsid protein p17 and with the hexon capsid protein p72 capsomers; these interactions form a rigid zipper structure that stabilizes the capsomers. Interacts with host IRF3.

Its subcellular location is the virion. It localises to the host cytoplasm. Together with the penton and the other minor capsid proteins (p17, p49), forms a complicated network immediately below the outer capsid shell, stabilizing the whole capsid. In addition, blocks IFN-beta transactivation mediated by the cGAS-STING pathway and regulates the transcriptional activity of IFN-beta. Mechanistically, suppresses the phosphorylation of host key adapter protein TBK1 and degrades host IRF3 in the cytoplasm. In African swine fever virus (isolate Tick/Malawi/Lil 20-1/1983) (ASFV), this protein is Minor capsid protein M1249L.